A 675-amino-acid polypeptide reads, in one-letter code: Potassium-transporting ATPase ATP-binding subunit (675 aa).

4 helical membrane-spanning segments follow: residues 34 to 54, 65 to 85, 216 to 236, and 245 to 265; these read IMFV…FPDI, LITI…SEAF, IALF…IVTL, and LILP…TTIG. The active-site 4-aspartylphosphate intermediate is aspartate 304. ATP contacts are provided by residues aspartate 341, glutamate 345, 372–379, and lysine 390; that span reads FTAETRMS. Mg(2+) is bound by residues aspartate 513 and aspartate 517. The next 3 membrane-spanning stretches (helical) occupy residues 569–591, 611–631, and 644–664; these read ALTT…ALMM, AIIS…PIAM, and IFIN…FLGI.

The protein belongs to the cation transport ATPase (P-type) (TC 3.A.3) family. Type IA subfamily. In terms of assembly, the system is composed of three essential subunits: KdpA, KdpB and KdpC.

Its subcellular location is the cell membrane. It catalyses the reaction K(+)(out) + ATP + H2O = K(+)(in) + ADP + phosphate + H(+). Part of the high-affinity ATP-driven potassium transport (or Kdp) system, which catalyzes the hydrolysis of ATP coupled with the electrogenic transport of potassium into the cytoplasm. This subunit is responsible for energy coupling to the transport system and for the release of the potassium ions to the cytoplasm. The protein is Potassium-transporting ATPase ATP-binding subunit of Staphylococcus aureus (strain MSSA476).